Reading from the N-terminus, the 312-residue chain is Ribosomal protein L11 methyltransferase (312 aa).

Residues T162, G183, D205, and N248 each coordinate S-adenosyl-L-methionine.

The protein belongs to the methyltransferase superfamily. PrmA family.

Its subcellular location is the cytoplasm. It carries out the reaction L-lysyl-[protein] + 3 S-adenosyl-L-methionine = N(6),N(6),N(6)-trimethyl-L-lysyl-[protein] + 3 S-adenosyl-L-homocysteine + 3 H(+). Functionally, methylates ribosomal protein L11. The chain is Ribosomal protein L11 methyltransferase from Bacillus cereus (strain Q1).